Reading from the N-terminus, the 445-residue chain is UPF0210 protein SPH_0352 (445 aa).

Belongs to the UPF0210 family. In terms of assembly, homodimer.

This chain is UPF0210 protein SPH_0352, found in Streptococcus pneumoniae (strain Hungary19A-6).